Reading from the N-terminus, the 112-residue chain is uncharacterized protein (112 aa).

This is an uncharacterized protein from Rickettsia conorii (strain ATCC VR-613 / Malish 7).